The following is an 85-amino-acid chain: MAHKKAGGSTRNGRDSEAKRLGVKRFGGEAVLAGSIIVRQRGTKFHAGTNVGCGRDHTLFAKADGKVKFEVKGPKNRKYISIVAE.

The interval 1–20 (MAHKKAGGSTRNGRDSEAKR) is disordered.

This sequence belongs to the bacterial ribosomal protein bL27 family.

The protein is Large ribosomal subunit protein bL27 of Salmonella agona (strain SL483).